The following is a 544-amino-acid chain: MATEEIHSLYDTILILDFGSQYSHLITRRCRELNVYCEMLPCTQKISELSWKPKGIILSGSPYSVYAPDAPHVDPDVFTLGVPILGICYGLQEIARVHGGTVDAHTHREYGYAKIEVVKTGKKDQDALFEGIEMEADGGLQVWMSHGDQLTSLPPNFVTIASTPTSPFTSVAHESKPIYGVQFHPEVSHSPRGKEVIAAFVKNVCGVRDGWSMESFIPKEIARIRQICGEKGQVIGAVSGGVDSTVAAKLMHEAIGDRFHAIMVDNGVLRKDEAKKVHKMLTVDLGVNLTVIDASELFLARLKGVEDPERKRKIIGNTFIEVFEAEAAKLEAAAEKELAEKGGEAKGKIEWLLQGTLYPDVIESISFKGPSATIKTHHNVGGLLEDMKLKLIEPLRELFKDEVRALGRLLNIPEHLVGRHPFPGPGLAIRILGEVTREQIAILQHADDIYIEEIRAAGLYDQISQAFVALLPVKAVGVAGDARTYDQVVAVRAVSTEDFMTADWFVFPPQVLKRISSRITNEVKGVNRVVYDITSKPPGTVEWL.

A Glutamine amidotransferase type-1 domain is found at 12-210; the sequence is TILILDFGSQ…VKNVCGVRDG (199 aa). Catalysis depends on cysteine 88, which acts as the Nucleophile. Residues histidine 184 and glutamate 186 contribute to the active site. In terms of domain architecture, GMPS ATP-PPase spans 211–419; sequence WSMESFIPKE…LNIPEHLVGR (209 aa). Position 239–245 (239–245) interacts with ATP; it reads SGGVDST. Positions 312, 481, 536, and 542 each coordinate XMP.

In terms of assembly, homodimer. Also forms a small population of homotetramers. The cofactor is Mg(2+).

It localises to the cytoplasm. The protein localises to the cytosol. It catalyses the reaction XMP + L-glutamine + ATP + H2O = GMP + L-glutamate + AMP + diphosphate + 2 H(+). Its pathway is purine metabolism; GMP biosynthesis; GMP from XMP (L-Gln route): step 1/1. The enzyme is inhibited by ECC1385; although this compound fails to inhibit growth of the organism. Functionally, catalyzes the conversion of xanthine monophosphate (XMP) to GMP in the presence of glutamine and ATP through an adenyl-XMP intermediate. This chain is GMP synthase [glutamine-hydrolyzing], found in Cryptococcus neoformans var. grubii serotype A (strain H99 / ATCC 208821 / CBS 10515 / FGSC 9487) (Filobasidiella neoformans var. grubii).